The sequence spans 217 residues: tRNA (guanine-N(7)-)-methyltransferase (217 aa).

S-adenosyl-L-methionine contacts are provided by Glu43, Asp68, Asn101, and Asn123. Lys127 provides a ligand contact to substrate. Residues 129-134 (RHNKRR) are interaction with RNA. Residues Asp159 and 196 to 199 (TEYE) each bind substrate.

The protein belongs to the class I-like SAM-binding methyltransferase superfamily. TrmB family.

It catalyses the reaction guanosine(46) in tRNA + S-adenosyl-L-methionine = N(7)-methylguanosine(46) in tRNA + S-adenosyl-L-homocysteine. It participates in tRNA modification; N(7)-methylguanine-tRNA biosynthesis. In terms of biological role, catalyzes the formation of N(7)-methylguanine at position 46 (m7G46) in tRNA. In Clostridium botulinum (strain Langeland / NCTC 10281 / Type F), this protein is tRNA (guanine-N(7)-)-methyltransferase.